Consider the following 79-residue polypeptide: Small ribosomal subunit protein bS18 (79 aa).

Belongs to the bacterial ribosomal protein bS18 family. Part of the 30S ribosomal subunit. Forms a tight heterodimer with protein bS6.

Binds as a heterodimer with protein bS6 to the central domain of the 16S rRNA, where it helps stabilize the platform of the 30S subunit. This Streptococcus pneumoniae serotype 19F (strain G54) protein is Small ribosomal subunit protein bS18.